The following is a 127-amino-acid chain: Fluoride-specific ion channel FluC (127 aa).

4 helical membrane passes run 4-24, 35-55, 71-91, and 103-123; these read LLLA…LLSM, LGTL…FAWF, TGFC…VFLL, and VFVN…LFSA. Na(+)-binding residues include G75 and T78.

The protein belongs to the fluoride channel Fluc/FEX (TC 1.A.43) family.

Its subcellular location is the cell inner membrane. The catalysed reaction is fluoride(in) = fluoride(out). Its activity is regulated as follows. Na(+) is not transported, but it plays an essential structural role and its presence is essential for fluoride channel function. In terms of biological role, fluoride-specific ion channel. Important for reducing fluoride concentration in the cell, thus reducing its toxicity. The protein is Fluoride-specific ion channel FluC of Escherichia coli O7:K1 (strain IAI39 / ExPEC).